Reading from the N-terminus, the 701-residue chain is Ribosomal RNA large subunit methyltransferase K/L (701 aa).

In terms of domain architecture, THUMP spans 44 to 155; sequence QAYKICLWSR…SDKLTVYLDL (112 aa).

The protein belongs to the methyltransferase superfamily. RlmKL family.

It is found in the cytoplasm. It carries out the reaction guanosine(2445) in 23S rRNA + S-adenosyl-L-methionine = N(2)-methylguanosine(2445) in 23S rRNA + S-adenosyl-L-homocysteine + H(+). The catalysed reaction is guanosine(2069) in 23S rRNA + S-adenosyl-L-methionine = N(2)-methylguanosine(2069) in 23S rRNA + S-adenosyl-L-homocysteine + H(+). Functionally, specifically methylates the guanine in position 2445 (m2G2445) and the guanine in position 2069 (m7G2069) of 23S rRNA. The sequence is that of Ribosomal RNA large subunit methyltransferase K/L from Pseudoalteromonas atlantica (strain T6c / ATCC BAA-1087).